The sequence spans 246 residues: tRNA (guanine-N(1)-)-methyltransferase (246 aa).

Residues G113 and 133–138 each bind S-adenosyl-L-methionine; that span reads IGDYVL.

The protein belongs to the RNA methyltransferase TrmD family. As to quaternary structure, homodimer.

The protein resides in the cytoplasm. It carries out the reaction guanosine(37) in tRNA + S-adenosyl-L-methionine = N(1)-methylguanosine(37) in tRNA + S-adenosyl-L-homocysteine + H(+). Specifically methylates guanosine-37 in various tRNAs. The protein is tRNA (guanine-N(1)-)-methyltransferase of Yersinia pseudotuberculosis serotype O:1b (strain IP 31758).